The sequence spans 338 residues: Nicotinate-nucleotide--dimethylbenzimidazole phosphoribosyltransferase (338 aa).

E306 (proton acceptor) is an active-site residue.

Belongs to the CobT family.

The catalysed reaction is 5,6-dimethylbenzimidazole + nicotinate beta-D-ribonucleotide = alpha-ribazole 5'-phosphate + nicotinate + H(+). Its pathway is nucleoside biosynthesis; alpha-ribazole biosynthesis; alpha-ribazole from 5,6-dimethylbenzimidazole: step 1/2. Its function is as follows. Catalyzes the synthesis of alpha-ribazole-5'-phosphate from nicotinate mononucleotide (NAMN) and 5,6-dimethylbenzimidazole (DMB). This is Nicotinate-nucleotide--dimethylbenzimidazole phosphoribosyltransferase from Cereibacter sphaeroides (strain ATCC 17023 / DSM 158 / JCM 6121 / CCUG 31486 / LMG 2827 / NBRC 12203 / NCIMB 8253 / ATH 2.4.1.) (Rhodobacter sphaeroides).